The chain runs to 217 residues: Large ribosomal subunit protein uL3 (217 aa).

Belongs to the universal ribosomal protein uL3 family. As to quaternary structure, part of the 50S ribosomal subunit. Forms a cluster with proteins L14 and L19.

In terms of biological role, one of the primary rRNA binding proteins, it binds directly near the 3'-end of the 23S rRNA, where it nucleates assembly of the 50S subunit. This chain is Large ribosomal subunit protein uL3, found in Mycobacterium leprae (strain TN).